A 3083-amino-acid polypeptide reads, in one-letter code: Laminin subunit alpha-1 (3083 aa).

Positions 1–24 (MRGSGTGAALLVLLASVLWVTVRS) are cleaved as a signal peptide. Residue glutamine 25 is modified to Pyrrolidone carboxylic acid. The 252-residue stretch at 25–276 (QQRGLFPAIL…SIKDISVGGM (252 aa)) folds into the Laminin N-terminal domain. Disulfide bonds link cysteine 277–cysteine 286, cysteine 279–cysteine 297, cysteine 299–cysteine 308, cysteine 311–cysteine 331, cysteine 334–cysteine 343, and cysteine 336–cysteine 368. Laminin EGF-like domains follow at residues 277-333 (CICY…ECEE), 334-403 (CNCH…PCRP), 404-460 (CNCD…NCIP), and 461-509 (CDCR…GCSE). N-linked (GlcNAc...) asparagine glycosylation occurs at asparagine 370. Cystine bridges form between cysteine 371–cysteine 380, cysteine 383–cysteine 401, cysteine 404–cysteine 416, cysteine 406–cysteine 434, cysteine 436–cysteine 445, cysteine 448–cysteine 458, cysteine 461–cysteine 474, cysteine 463–cysteine 478, cysteine 480–cysteine 489, and cysteine 492–cysteine 507. Residues 510–519 (CFCFGVSGVC) form the Laminin EGF-like 5; first part domain. The 193-residue stretch at 523–715 (TWSISQVTNM…DLAVAADVEH (193 aa)) folds into the Laminin IV type A 1 domain. N-linked (GlcNAc...) asparagine glycosylation occurs at asparagine 672. The 33-residue stretch at 716–748 (CECPQGYTGTSCEACLPGYYRVDGILFGGICQP) folds into the Laminin EGF-like 5; second part domain. 32 cysteine pairs are disulfide-bonded: cysteine 749–cysteine 758, cysteine 751–cysteine 764, cysteine 767–cysteine 776, cysteine 779–cysteine 795, cysteine 798–cysteine 813, cysteine 800–cysteine 823, cysteine 826–cysteine 835, cysteine 838–cysteine 853, cysteine 856–cysteine 870, cysteine 858–cysteine 877, cysteine 880–cysteine 889, cysteine 892–cysteine 906, cysteine 909–cysteine 921, cysteine 911–cysteine 928, cysteine 930–cysteine 939, cysteine 942–cysteine 955, cysteine 958–cysteine 970, cysteine 960–cysteine 976, cysteine 978–cysteine 987, cysteine 990–cysteine 1002, cysteine 1005–cysteine 1014, cysteine 1007–cysteine 1021, cysteine 1023–cysteine 1032, cysteine 1035–cysteine 1048, cysteine 1051–cysteine 1063, cysteine 1053–cysteine 1070, cysteine 1072–cysteine 1081, cysteine 1084–cysteine 1094, cysteine 1097–cysteine 1109, cysteine 1099–cysteine 1125, cysteine 1127–cysteine 1136, and cysteine 1139–cysteine 1154. Laminin EGF-like domains follow at residues 749–797 (CECH…DCQP), 798–855 (CACP…TCVP), 856–908 (CNCS…NCRA), 909–957 (CDCH…GCVP), 958–1004 (CNCS…GCTP), 1005–1050 (CDCA…GCQA), 1051–1096 (CNCS…DCVP), and 1097–1156 (CGCD…GCSP). A Cell attachment site motif is present at residues 1147 to 1149 (RGD). The 10-residue stretch at 1157–1166 (CFCFGLSQLC) folds into the Laminin EGF-like 14; first part domain. A Laminin IV type A 2 domain is found at 1177–1368 (ITLASDQPLL…EGEAALLLEL (192 aa)). N-linked (GlcNAc...) asparagine glycosylation occurs at asparagine 1344. A Laminin EGF-like 14; second part domain is found at 1369 to 1409 (CVCPPGTAGHSCQDCAPGYYREKLPESGGRGPRPLLAPCVP). Disulfide bonds link cysteine 1410-cysteine 1419, cysteine 1412-cysteine 1426, cysteine 1429-cysteine 1438, cysteine 1441-cysteine 1456, cysteine 1459-cysteine 1473, cysteine 1461-cysteine 1483, cysteine 1486-cysteine 1495, cysteine 1498-cysteine 1513, cysteine 1516-cysteine 1528, cysteine 1518-cysteine 1535, cysteine 1537-cysteine 1546, and cysteine 1549-cysteine 1560. Laminin EGF-like domains follow at residues 1410–1458 (CNCN…DCTP), 1459–1515 (CTCP…SCQT), and 1516–1562 (CDCN…DCVS). The interval 1564-2123 (DDDCVGPLLN…SRARKQVASI (560 aa)) is domain II and I. Residues 1617-1691 (AKKIRAEIQL…VATLNQTARK (75 aa)) are a coiled coil. N-linked (GlcNAc...) asparagine glycans are attached at residues asparagine 1659, asparagine 1686, asparagine 1718, asparagine 1725, asparagine 1763, and asparagine 1811. The stretch at 1723–1809 (QQNATLELKA…QEKKLRVQEE (87 aa)) forms a coiled coil. Residues 1868–1901 (KRRARDLVHRAEQHASELQSRAGALDRDLENVRN) adopt a coiled-coil conformation. 4 N-linked (GlcNAc...) asparagine glycosylation sites follow: asparagine 1935, asparagine 2026, asparagine 2045, and asparagine 2066. Laminin G-like domains lie at 2124–2304 (KVAV…CNGC), 2312–2488 (DSSF…RKGC), 2493–2679 (IQSV…LDTC), 2721–2893 (AHQF…VDRC), and 2898–3078 (QEGT…PHSC). Cysteines 2278 and 2304 form a disulfide. Asparagine 2355 is a glycosylation site (N-linked (GlcNAc...) asparagine). Cystine bridges form between cysteine 2464/cysteine 2488 and cysteine 2652/cysteine 2679. N-linked (GlcNAc...) asparagine glycosylation is present at asparagine 2834. Cysteines 2868 and 2893 form a disulfide. Asparagine 2923 carries N-linked (GlcNAc...) asparagine glycosylation. Cysteine 3047 and cysteine 3078 are disulfide-bonded.

Laminin is a complex glycoprotein, consisting of three different polypeptide chains (alpha, beta, gamma), which are bound to each other by disulfide bonds into a cross-shaped molecule comprising one long and three short arms with globules at each end. Alpha-1 is a subunit of laminin-1 (laminin-111 or EHS laminin) and laminin-3 (laminin-121 or S-laminin). In terms of processing, tyrosine phosphorylated by PKDCC/VLK.

The protein localises to the secreted. It is found in the extracellular space. Its subcellular location is the extracellular matrix. The protein resides in the basement membrane. In terms of biological role, binding to cells via a high affinity receptor, laminin is thought to mediate the attachment, migration and organization of cells into tissues during embryonic development by interacting with other extracellular matrix components. The chain is Laminin subunit alpha-1 (Lama1) from Mus musculus (Mouse).